A 296-amino-acid polypeptide reads, in one-letter code: MNAEPERKFGVVVVGVGRAGSVRMRDLRNPHPSSAFLNLIGFVSRRELGSIDGVQQISLEDALSSQEVEVAYICSESSSHEDYIRQFLNAGKHVLVEYPMTLSLAAAQELWELAEQKGKVLHEEHVELLMEEFAFLKKEVVGKDLLKGSLLFTAGPLEEERFGFPAFSGISRLTWLVSLFGELSLVSATLEERKEDQYMKMTVCLETEKKSPLSWIEEKGPGLKRNRYLSFHFKSGSLENVPNVGVNKNIFLKDQNIFVQKLLGQFSEKELAAEKKRILHCLGLAEEIQKYCCSRK.

A propeptide spanning residues 1–2 is cleaved from the precursor; it reads MN. Residues 16-19, 44-46, 77-80, and Tyr-98 each bind NADP(+); these read VGRA, SRR, and SSSH. Thr-174 is modified (phosphothreonine). Ser-178 and Ser-230 each carry phosphoserine. N6-acetyllysine is present on residues Lys-248 and Lys-253. 4 residues coordinate Zn(2+): His-280, Cys-281, Cys-292, and Cys-293.

The protein belongs to the Gfo/Idh/MocA family. Biliverdin reductase subfamily. Monomer. The cofactor is Zn(2+). In terms of tissue distribution, liver.

Its subcellular location is the cytoplasm. It is found in the cytosol. The enzyme catalyses (4Z,15Z)-bilirubin IXalpha + NAD(+) = biliverdin IXalpha + NADH + H(+). It carries out the reaction (4Z,15Z)-bilirubin IXalpha + NADP(+) = biliverdin IXalpha + NADPH + H(+). It participates in porphyrin-containing compound metabolism; protoheme degradation. Functionally, reduces the gamma-methene bridge of the open tetrapyrrole, biliverdin IXalpha, to bilirubin with the concomitant oxidation of a NADH or NADPH cofactor. Does not reduce bilirubin IXbeta. Uses the reactants NADH or NADPH depending on the pH; NADH is used at the acidic pH range (6-6.9) and NADPH at the alkaline range (8.5-8.7). NADPH, however, is the probable reactant in biological systems. This is Biliverdin reductase A from Homo sapiens (Human).